Here is a 453-residue protein sequence, read N- to C-terminus: Plasmepsin II (453 aa).

Over 1-37 (MDITVREHDFKHGFIKSNSTFDGLNIDNSKNKKKIQK) the chain is Cytoplasmic. Positions 1 to 124 (MDITVREHDF…SGLTKTNYLG (124 aa)) are excised as a propeptide. A helical; Signal-anchor for type II membrane protein membrane pass occupies residues 38 to 58 (GFQILYVLLFCSVMCGLFYYV). The Lumenal portion of the chain corresponds to 59-453 (YENVWLQRDN…VGIALAKKNL (395 aa)). The 308-residue stretch at 140–447 (FYGDAEVGDN…DYDNQSVGIA (308 aa)) folds into the Peptidase A1 domain. D158 is a catalytic residue. Cysteines 171 and 176 form a disulfide. Residue D338 is part of the active site. A disulfide bridge links C373 with C409.

The protein belongs to the peptidase A1 family. As to quaternary structure, component of the hemozoin formation complex (HFC) composed of falcipains FP2A and/or FP2B, plasmepsins PMII, PMIII/HAP and PMIV, heme detoxifying protein HDP and falcilysin FLN. The HFC complex is involved in hemoglobin degradation and detoxification of heme in the food vacuole during the asexual blood stage. In terms of processing, not N-glycosylated. Proteolytically cleaved into the soluble active mature form in the digestive vacuole by cysteine protease falcipains; the process begins at the early ring stage. Proteolysis requires an acidic environment. In absence of falcipains, autoprocessing may serve as an alternate activation system.

It localises to the membrane. The protein localises to the vacuole lumen. It is found in the vacuole membrane. It catalyses the reaction Hydrolysis of the bonds linking certain hydrophobic residues in hemoglobin or globin. Also cleaves small molecules substrates such as Ala-Leu-Glu-Arg-Thr-Phe-|-Phe(NO2)-Ser-Phe-Pro-Thr.. Its activity is regulated as follows. Inhibited by pepstatin A. Inhibited by KNI derived compounds (KNI-10742, 10743, 10395, 10333, and 10343). In terms of biological role, during the asexual blood stage, participates in initial cleavage of native host hemoglobin (Hb) resulting in Hb denaturation. May cleave preferentially denatured hemoglobin that has been cleaved by PMI. Digestion of host Hb is an essential step which provides the parasite with amino acids for protein synthesis, and regulates osmolarity. The polypeptide is Plasmepsin II (Plasmodium falciparum (isolate 3D7)).